Reading from the N-terminus, the 100-residue chain is Small ribosomal subunit protein uS14 (100 aa).

The protein belongs to the universal ribosomal protein uS14 family. As to quaternary structure, part of the 30S ribosomal subunit. Contacts proteins S3 and S10.

Binds 16S rRNA, required for the assembly of 30S particles and may also be responsible for determining the conformation of the 16S rRNA at the A site. The protein is Small ribosomal subunit protein uS14 of Synechococcus sp. (strain CC9311).